We begin with the raw amino-acid sequence, 133 residues long: Snaclec A9 (133 aa).

3 disulfide bridges follow: cysteine 4/cysteine 15, cysteine 32/cysteine 131, and cysteine 106/cysteine 123. One can recognise a C-type lectin domain in the interval 11–132 (YEGHCYKVFN…CGQPYRFTCE (122 aa)).

This sequence belongs to the snaclec family. Heterodimer; disulfide-linked. Expressed by the venom gland.

The protein resides in the secreted. Functionally, interferes with one step of hemostasis (modulation of platelet aggregation, or coagulation cascade, for example). The chain is Snaclec A9 from Macrovipera lebetinus (Levantine viper).